The primary structure comprises 274 residues: 2,3,4,5-tetrahydropyridine-2,6-dicarboxylate N-succinyltransferase (274 aa).

This sequence belongs to the transferase hexapeptide repeat family.

It localises to the cytoplasm. The catalysed reaction is (S)-2,3,4,5-tetrahydrodipicolinate + succinyl-CoA + H2O = (S)-2-succinylamino-6-oxoheptanedioate + CoA. Its pathway is amino-acid biosynthesis; L-lysine biosynthesis via DAP pathway; LL-2,6-diaminopimelate from (S)-tetrahydrodipicolinate (succinylase route): step 1/3. The polypeptide is 2,3,4,5-tetrahydropyridine-2,6-dicarboxylate N-succinyltransferase (Erwinia tasmaniensis (strain DSM 17950 / CFBP 7177 / CIP 109463 / NCPPB 4357 / Et1/99)).